Here is a 545-residue protein sequence, read N- to C-terminus: Chaperonin GroEL (545 aa).

ATP contacts are provided by residues 30 to 33, K51, 87 to 91, G415, and D495; these read TLGP and DGTTT.

It belongs to the chaperonin (HSP60) family. In terms of assembly, forms a cylinder of 14 subunits composed of two heptameric rings stacked back-to-back. Interacts with the co-chaperonin GroES.

Its subcellular location is the cytoplasm. It carries out the reaction ATP + H2O + a folded polypeptide = ADP + phosphate + an unfolded polypeptide.. Functionally, together with its co-chaperonin GroES, plays an essential role in assisting protein folding. The GroEL-GroES system forms a nano-cage that allows encapsulation of the non-native substrate proteins and provides a physical environment optimized to promote and accelerate protein folding. In Shewanella oneidensis (strain ATCC 700550 / JCM 31522 / CIP 106686 / LMG 19005 / NCIMB 14063 / MR-1), this protein is Chaperonin GroEL.